Reading from the N-terminus, the 319-residue chain is ATP-dependent 6-phosphofructokinase (319 aa).

Residue Gly-11 coordinates ATP. ADP contacts are provided by residues Arg-21–Arg-25 and Asp-59. ATP-binding positions include Arg-72 to Cys-73 and Gly-102 to Ser-105. Asp-103 contributes to the Mg(2+) binding site. Thr-125–Asp-127 is a binding site for substrate. Asp-127 acts as the Proton acceptor in catalysis. Arg-154 lines the ADP pocket. Substrate-binding positions include Arg-162 and Met-169–Arg-171. ADP is bound by residues Gly-185–Glu-187, Arg-211, and Lys-213–His-215. Residues Glu-222, Arg-243, and His-249–Arg-252 contribute to the substrate site.

Belongs to the phosphofructokinase type A (PFKA) family. ATP-dependent PFK group I subfamily. Prokaryotic clade 'B1' sub-subfamily. Homotetramer. It depends on Mg(2+) as a cofactor.

It localises to the cytoplasm. It catalyses the reaction beta-D-fructose 6-phosphate + ATP = beta-D-fructose 1,6-bisphosphate + ADP + H(+). It functions in the pathway carbohydrate degradation; glycolysis; D-glyceraldehyde 3-phosphate and glycerone phosphate from D-glucose: step 3/4. Its activity is regulated as follows. Allosterically activated by ADP and other diphosphonucleosides, and allosterically inhibited by phosphoenolpyruvate. Catalyzes the phosphorylation of D-fructose 6-phosphate to fructose 1,6-bisphosphate by ATP, the first committing step of glycolysis. The protein is ATP-dependent 6-phosphofructokinase of Geobacillus stearothermophilus (Bacillus stearothermophilus).